The sequence spans 479 residues: Anaerobic nitric oxide reductase flavorubredoxin (479 aa).

Residues 30-210 (LRGSSYNSYL…PFSRLVTPKI (181 aa)) form a zinc metallo-hydrolase region. Positions 79, 81, 83, 147, 166, and 227 each coordinate Fe cation. The 140-residue stretch at 254-393 (ITIVYDTMSN…LCREHGREIA (140 aa)) folds into the Flavodoxin-like domain. Residues 260-264 (TMSNN) and 342-369 (AFGS…EMSL) each bind FMN. A Rubredoxin-like domain is found at 423 to 474 (GPRMQCSVCQWIYDPAKGEPMQDVAPGTPWSEVPDNFLCPECSLGKDVFDEL). Fe cation-binding residues include Cys428, Cys431, Cys461, and Cys464.

The protein in the N-terminal section; belongs to the zinc metallo-hydrolase group 3 family. In terms of assembly, homotetramer. Requires Fe cation as cofactor. FMN serves as cofactor.

The protein localises to the cytoplasm. It functions in the pathway nitrogen metabolism; nitric oxide reduction. In terms of biological role, anaerobic nitric oxide reductase; uses NADH to detoxify nitric oxide (NO), protecting several 4Fe-4S NO-sensitive enzymes. Has at least 2 reductase partners, only one of which (NorW, flavorubredoxin reductase) has been identified. NO probably binds to the di-iron center; electrons enter from the NorW at rubredoxin and are transferred sequentially to the FMN center and the di-iron center. Also able to function as an aerobic oxygen reductase. This Escherichia coli (strain UTI89 / UPEC) protein is Anaerobic nitric oxide reductase flavorubredoxin.